The primary structure comprises 196 residues: Transmembrane protein 52 (196 aa).

An N-terminal signal peptide occupies residues 1–28 (MAPGPSATQGILLLLPLLPLSQVTLGSA). Residues 47–67 (LWHVGLILLAILLMLLCGVTA) form a helical membrane-spanning segment. A disordered region spans residues 162–196 (EEVAAPSEKTNSLPEALEPETTGGPQEPGPSAQRP).

It localises to the membrane. This is Transmembrane protein 52 (Tmem52) from Mus musculus (Mouse).